Here is a 395-residue protein sequence, read N- to C-terminus: Elongation factor Tu (395 aa).

The 195-residue stretch at 10 to 204 (KPHVNIGTIG…AVDEYIPTPQ (195 aa)) folds into the tr-type G domain. The segment at 19 to 26 (GHVDHGKT) is G1. Position 19-26 (19-26 (GHVDHGKT)) interacts with GTP. Thr-26 is a binding site for Mg(2+). The G2 stretch occupies residues 60–64 (GITIS). The tract at residues 81–84 (DCPG) is G3. Residues 81–85 (DCPGH) and 136–139 (NKCD) each bind GTP. The interval 136 to 139 (NKCD) is G4. The G5 stretch occupies residues 174–176 (SAL).

It belongs to the TRAFAC class translation factor GTPase superfamily. Classic translation factor GTPase family. EF-Tu/EF-1A subfamily. In terms of assembly, monomer.

It is found in the cytoplasm. It carries out the reaction GTP + H2O = GDP + phosphate + H(+). Functionally, GTP hydrolase that promotes the GTP-dependent binding of aminoacyl-tRNA to the A-site of ribosomes during protein biosynthesis. The sequence is that of Elongation factor Tu from Geobacillus kaustophilus (strain HTA426).